The primary structure comprises 511 residues: Maturase K (511 aa).

Belongs to the intron maturase 2 family. MatK subfamily.

Its subcellular location is the plastid. It localises to the chloroplast. Its function is as follows. Usually encoded in the trnK tRNA gene intron. Probably assists in splicing its own and other chloroplast group II introns. The polypeptide is Maturase K (Lolium perenne (Perennial ryegrass)).